A 157-amino-acid polypeptide reads, in one-letter code: Epithelial membrane protein 1 (157 aa).

A helical membrane pass occupies residues 1–21 (MLVLLAGIFVVHIATVIMLFV). N43 and N46 each carry an N-linked (GlcNAc...) asparagine glycan. The next 3 membrane-spanning stretches (helical) occupy residues 67–87 (FMILSIIFCVIALLVFVFQLF), 95–115 (FFLSGATTLVCWLCILVGVSI), and 134–154 (YILGWICFCFSFIIGVLYLVL).

The protein belongs to the PMP-22/EMP/MP20 family.

The protein localises to the membrane. This chain is Epithelial membrane protein 1 (EMP1), found in Homo sapiens (Human).